We begin with the raw amino-acid sequence, 596 residues long: NADH-quinone oxidoreductase subunit C/D (596 aa).

The tract at residues 1–186 (MTDLTAQEPA…SPFELTKAKQ (186 aa)) is NADH dehydrogenase I subunit C. Residues 210–596 (DFMFLNLGPN…IDFVMSDVDR (387 aa)) are NADH dehydrogenase I subunit D.

This sequence in the N-terminal section; belongs to the complex I 30 kDa subunit family. The protein in the C-terminal section; belongs to the complex I 49 kDa subunit family. In terms of assembly, NDH-1 is composed of 13 different subunits. Subunits NuoB, CD, E, F, and G constitute the peripheral sector of the complex.

It is found in the cell inner membrane. The enzyme catalyses a quinone + NADH + 5 H(+)(in) = a quinol + NAD(+) + 4 H(+)(out). Functionally, NDH-1 shuttles electrons from NADH, via FMN and iron-sulfur (Fe-S) centers, to quinones in the respiratory chain. The immediate electron acceptor for the enzyme in this species is believed to be ubiquinone. Couples the redox reaction to proton translocation (for every two electrons transferred, four hydrogen ions are translocated across the cytoplasmic membrane), and thus conserves the redox energy in a proton gradient. The polypeptide is NADH-quinone oxidoreductase subunit C/D (Shigella flexneri serotype 5b (strain 8401)).